Consider the following 140-residue polypeptide: Pro-variola growth factor (140 aa).

Residues 1-18 (MSMKYLMLLFAAMIIRSF) form the signal peptide. Topologically, residues 19-100 (ANSGNAIETT…SEKPNTTTSY (82 aa)) are extracellular. The N-linked (GlcNAc...) asparagine; by host glycan is linked to asparagine 34. The EGF-like domain maps to 41–81 (AIRLCGPEGDRYCFHGICIHARDIDGMYCRCSHGYTGIRCQ). Disulfide bonds link cysteine 45–cysteine 58, cysteine 53–cysteine 69, and cysteine 71–cysteine 80. N-linked (GlcNAc...) asparagine; by host glycosylation occurs at asparagine 95. Residues 101 to 121 (IPSPGIVLVLLVSIIVCCLLF) form a helical membrane-spanning segment. Over 122–140 (VYRFTRRTNKLPLQDMVVP) the chain is Cytoplasmic.

Belongs to the orthopoxvirus OPG019 family. As to quaternary structure, variola growth factor interacts with host EGFR and promotes EGFR dimerization.

Its subcellular location is the host membrane. The protein resides in the secreted. Stimulates cellular proliferation (hyperplasia)and mobility around infected cells to promote rapid and efficient spread of infection. This effect is beneficial for virus replication in vivo, because poxviruses replicate possibly better in proliferating cells than in quiescent cells. Acts by binding host EGFR, inducing its dimerization, autophosphorylation and leading to activation of several cellular pathways regulating cell proliferation or cell survival. The activation by host EGFR of mitogen activated protein kinases (MAPK) and extracellular-signal regulated kinases (ERK) are essential for the positive effect of vaccinia growth factor on poxvirus virulence in vivo. The polypeptide is Pro-variola growth factor (OPG019) (Variola virus (isolate Human/India/Ind3/1967) (VARV)).